We begin with the raw amino-acid sequence, 106 residues long: Urease subunit beta (106 aa).

It belongs to the urease beta subunit family. In terms of assembly, heterotrimer of UreA (gamma), UreB (beta) and UreC (alpha) subunits. Three heterotrimers associate to form the active enzyme.

It localises to the cytoplasm. The catalysed reaction is urea + 2 H2O + H(+) = hydrogencarbonate + 2 NH4(+). It participates in nitrogen metabolism; urea degradation; CO(2) and NH(3) from urea (urease route): step 1/1. The protein is Urease subunit beta of Acinetobacter baumannii (strain SDF).